Reading from the N-terminus, the 232-residue chain is MENQPKLNSSKEVIAFLAERFPHCFSAEGEARPLKIGIFQDLVDRVAGEMNLSKTQLRSALRLYTSSWRYLYGVKPGATRVDLDGNPCGELDEQHVEHARKQLEEAKARVQAQRAEQQAKKREAAAAAGEKEDAPRRERKPRPTTPRRKEGAERKPRAQKSVEKAPKTVKAPREEQHTPVSDISALTVGQALKVKAGQNAMDATVLEITKDGVRVQLNSGMSLIVRAEHLVF.

The disordered stretch occupies residues 105–182; the sequence is EAKARVQAQR…REEQHTPVSD (78 aa). A compositionally biased stretch (basic and acidic residues) spans 117-136; the sequence is QQAKKREAAAAAGEKEDAPR. Basic residues predominate over residues 137 to 146; sequence RERKPRPTTP. The span at 147–177 shows a compositional bias: basic and acidic residues; sequence RRKEGAERKPRAQKSVEKAPKTVKAPREEQH.

This sequence belongs to the ProQ family.

The protein resides in the cytoplasm. In terms of biological role, RNA chaperone with significant RNA binding, RNA strand exchange and RNA duplexing activities. May regulate ProP activity through an RNA-based, post-transcriptional mechanism. This is RNA chaperone ProQ from Escherichia coli O7:K1 (strain IAI39 / ExPEC).